The chain runs to 654 residues: tRNA 5-methylaminomethyl-2-thiouridine biosynthesis bifunctional protein MnmC (654 aa).

A tRNA (mnm(5)s(2)U34)-methyltransferase region spans residues methionine 1–glutamine 235. Residues valine 261–glycine 654 are FAD-dependent cmnm(5)s(2)U34 oxidoreductase.

This sequence in the N-terminal section; belongs to the methyltransferase superfamily. tRNA (mnm(5)s(2)U34)-methyltransferase family. In the C-terminal section; belongs to the DAO family. It depends on FAD as a cofactor.

The protein localises to the cytoplasm. It carries out the reaction 5-aminomethyl-2-thiouridine(34) in tRNA + S-adenosyl-L-methionine = 5-methylaminomethyl-2-thiouridine(34) in tRNA + S-adenosyl-L-homocysteine + H(+). Functionally, catalyzes the last two steps in the biosynthesis of 5-methylaminomethyl-2-thiouridine (mnm(5)s(2)U) at the wobble position (U34) in tRNA. Catalyzes the FAD-dependent demodification of cmnm(5)s(2)U34 to nm(5)s(2)U34, followed by the transfer of a methyl group from S-adenosyl-L-methionine to nm(5)s(2)U34, to form mnm(5)s(2)U34. The protein is tRNA 5-methylaminomethyl-2-thiouridine biosynthesis bifunctional protein MnmC of Pseudomonas aeruginosa (strain UCBPP-PA14).